Consider the following 123-residue polypeptide: Ribosome-binding factor A (123 aa).

Belongs to the RbfA family. As to quaternary structure, monomer. Binds 30S ribosomal subunits, but not 50S ribosomal subunits or 70S ribosomes.

It is found in the cytoplasm. Functionally, one of several proteins that assist in the late maturation steps of the functional core of the 30S ribosomal subunit. Associates with free 30S ribosomal subunits (but not with 30S subunits that are part of 70S ribosomes or polysomes). Required for efficient processing of 16S rRNA. May interact with the 5'-terminal helix region of 16S rRNA. This Chlamydia trachomatis serovar A (strain ATCC VR-571B / DSM 19440 / HAR-13) protein is Ribosome-binding factor A.